The chain runs to 282 residues: Protein OS-9 homolog (282 aa).

The first 23 residues, 1–23 (MRITQILLCLVIVALSSSSHVWS), serve as a signal peptide directing secretion. The N-linked (GlcNAc...) asparagine glycan is linked to N94. Residues 120–239 (EKCLFRQEGW…TVQCPTLCKH (120 aa)) form the MRH domain. The cysteines at positions 122 and 135 are disulfide-linked. W129, W130, and Q142 together coordinate a mannooligosaccharide derivative. Residues N169 and N190 are each glycosylated (N-linked (GlcNAc...) asparagine). Cystine bridges form between C194-C225 and C209-C237. Residues D195, R201, E221, and Y227 each coordinate a mannooligosaccharide derivative. The span at 262-276 (DATRNKEEQAVDESP) shows a compositional bias: basic and acidic residues. The tract at residues 262-282 (DATRNKEEQAVDESPKMIADS) is disordered.

This sequence belongs to the OS-9 family. In terms of assembly, interacts with HRD3A.

The protein localises to the endoplasmic reticulum. Functionally, lectin which functions in endoplasmic reticulum (ER) quality control and ER-associated degradation (ERAD). May bind terminally misfolded non-glycosylated proteins as well as improperly folded glycoproteins, retain them in the ER, and possibly transfer them to the ubiquitination machinery and promote their degradation. Targets the misfolded LRR receptor kinase BRI1 and the misfolded receptor-like kinase EFR. This chain is Protein OS-9 homolog, found in Arabidopsis thaliana (Mouse-ear cress).